The primary structure comprises 261 residues: MVWKITGPLQACQLLLVVLSLPQGRTSSVLTVNGRTENYILDTQHGVQASLECAVQNHTEDEELLWYREDGIVDLKNGNKINISSVCVSPINESDNGVRFTCKLQRDQTVSVTVVLNVTFPPLLSGNGFQTVEENSDVSLVCNVKSNPQAQMMWYKNNSALVLEKGRHQIHQTRESFQLSITKVKKSDNGTYSCIASSSLKMETMDFHLLVKDKVFVMPAEPIIAACVVVVLTMAFALFSRRKRIMKLCGKKNDPNSETAL.

A signal peptide spans 1–26 (MVWKITGPLQACQLLLVVLSLPQGRT). In terms of domain architecture, Ig-like C2-type 1 spans 27 to 113 (SSVLTVNGRT…LQRDQTVSVT (87 aa)). Residues 27–215 (SSVLTVNGRT…DFHLLVKDKV (189 aa)) lie on the Extracellular side of the membrane. A disulfide bridge connects residues Cys53 and Cys102. Residues Asn57, Asn82, Asn92, Asn117, Asn157, and Asn189 are each glycosylated (N-linked (GlcNAc...) asparagine). The region spanning 121–206 (PPLLSGNGFQ…SSSLKMETMD (86 aa)) is the Ig-like C2-type 2 domain. Residues Cys142 and Cys194 are joined by a disulfide bond. A helical membrane pass occupies residues 216–236 (FVMPAEPIIAACVVVVLTMAF). Over 237 to 261 (ALFSRRKRIMKLCGKKNDPNSETAL) the chain is Cytoplasmic.

In terms of assembly, homodimer. In terms of processing, N-glycosylated.

Its subcellular location is the cell membrane. The protein localises to the cytoplasm. May control cell-cell adhesion, cell migration and proliferation, cell morphology, and protects renal epithelial cells from oxidative cell injury to promote cell survival. In Mus musculus (Mouse), this protein is Transmembrane and immunoglobulin domain-containing protein 1.